A 2839-amino-acid polypeptide reads, in one-letter code: MAAHRPVEWVQAVVSRFDEQLPIKTGQQNTHTKVSTEHNKECLINISKYKFSLVISGLTTILKNVNNMRIFGEAAEKNLYLSQLIILDTLEKCLAGQPKDTMRLDETMLVKQLLPEICHFLHTCREGNQHAAELRNSASGVLFSLSCNNFNAVFSRISTRLQELTVCSEDNVDVHDIELLQYINVDCAKLKRLLKETAFKFKALKKVAQLAVINSLEKAFWNWVENYPDEFTKLYQIPQTDMAECAEKLFDLVDGFAESTKRKAAVWPLQIILLILCPEIIQDISKDVVDENNMNKKLFLDSLRKALAGHGGSRQLTESAAIACVKLCKASTYINWEDNSVIFLLVQSMVVDLKNLLFNPSKPFSRGSQPADVDLMIDCLVSCFRISPHNNQHFKICLAQNSPSTFHYVLVNSLHRIITNSALDWWPKIDAVYCHSVELRNMFGETLHKAVQGCGAHPAIRMAPSLTFKEKVTSLKFKEKPTDLETRSYKYLLLSMVKLIHADPKLLLCNPRKQGPETQGSTAELITGLVQLVPQSHMPEIAQEAMEALLVLHQLDSIDLWNPDAPVETFWEISSQMLFYICKKLTSHQMLSSTEILKWLREILICRNKFLLKNKQADRSSCHFLLFYGVGCDIPSSGNTSQMSMDHEELLRTPGASLRKGKGNSSMDSAAGCSGTPPICRQAQTKLEVALYMFLWNPDTEAVLVAMSCFRHLCEEADIRCGVDEVSVHNLLPNYNTFMEFASVSNMMSTGRAALQKRVMALLRRIEHPTAGNTEAWEDTHAKWEQATKLILNYPKAKMEDGQAAESLHKTIVKRRMSHVSGGGSIDLSDTDSLQEWINMTGFLCALGGVCLQQRSNSGLATYSPPMGPVSERKGSMISVMSSEGNADTPVSKFMDRLLSLMVCNHEKVGLQIRTNVKDLVGLELSPALYPMLFNKLKNTISKFFDSQGQVLLTDTNTQFVEQTIAIMKNLLDNHTEGSSEHLGQASIETMMLNLVRYVRVLGNMVHAIQIKTKLCQLVEVMMARRDDLSFCQEMKFRNKMVEYLTDWVMGTSNQAADDDVKCLTRDLDQASMEAVVSLLAGLPLQPEEGDGVELMEAKSQLFLKYFTLFMNLLNDCSEVEDESAQTGGRKRGMSRRLASLRHCTVLAMSNLLNANVDSGLMHSIGLGYHKDLQTRATFMEVLTKILQQGTEFDTLAETVLADRFERLVELVTMMGDQGELPIAMALANVVPCSQWDELARVLVTLFDSRHLLYQLLWNMFSKEVELADSMQTLFRGNSLASKIMTFCFKVYGATYLQKLLDPLLRIVITSSDWQHVSFEVDPTRLEPSESLEENQRNLLQMTEKFFHAIISSSSEFPPQLRSVCHCLYQATCHSLLNKATVKEKKENKKSVVSQRFPQNSIGAVGSAMFLRFINPAIVSPYEAGILDKKPPPRIERGLKLMSKILQSIANHVLFTKEEHMRPFNDFVKSNFDAARRFFLDIASDCPTSDAVNHSLSFISDGNVLALHRLLWNNQEKIGQYLSSNRDHKAVGRRPFDKMATLLAYLGPPEHKPVADTHWSSLNLTSSKFEEFMTRHQVHEKEEFKALKTLSIFYQAGTSKAGNPIFYYVARRFKTGQINGDLLIYHVLLTLKPYYAKPYEIVVDLTHTGPSNRFKTDFLSKWFVVFPGFAYDNVSAVYIYNCNSWVREYTKYHERLLTGLKGSKRLVFIDCPGKLAEHIEHEQQKLPAATLALEEDLKVFHNALKLAHKDTKVSIKVGSTAVQVTSAERTKVLGQSVFLNDIYYASEIEEICLVDENQFTLTIANQGTPLTFMHQECEAIVQSIIHIRTRWELSQPDSIPQHTKIRPKDVPGTLLNIALLNLGSSDPSLRSAAYNLLCALTCTFNLKIEGQLLETSGLCIPANNTLFIVSISKTLAANEPHLTLEFLEECISGFSKSSIELKHLCLEYMTPWLSNLVRFCKHNDDAKRQRVTAILDKLITMTINEKQMYPSIQAKIWGSLGQITDLLDVVLDSFIKTSATGGLGSIKAEVMADTAVALASGNVKLVSSKVIGRMCKIIDKTCLSPTPTLEQHLMWDDIAILARYMLMLSFNNSLDVAAHLPYLFHVVTFLVATGPLSLRASTHGLVINIIHSLCTCSQLHFSEETKQVLRLSLTEFSLPKFYLLFGISKVKSAAVIAFRSSYRDRSFSPGSYERETFALTSLETVTEALLEIMEACMRDIPTCKWLDQWTELAQRFAFQYNPSLQPRALVVFGCISKRVSHGQIKQIIRILSKALESCLKGPDTYNSQVLIEATVIALTKLQPLLNKDSPLHKALFWVAVAVLQLDEVNLYSAGTALLEQNLHTLDSLRIFNDKSPEEVFMAIRNPLEWHCKQMDHFVGLNFNSNFNFALVGHLLKGYRHPSPAIVARTVRILHTLLTLVNKHRNCDKFEVNTQSVAYLAALLTVSEEVRSRCSLKHRKSLLLTDISMENVPMDTYPIHHGDPSYRTLKETQPWSSPKGSEGYLAATYPTVGQTSPRARKSMSLDMGQPSQANTKKLLGTRKSFDHLISDTKAPKRQEMESGITTPPKMRRVAETDYEMETQRISSSQQHPHLRKVSVSESNVLLDEEVLTDPKIQALLLTVLATLVKYTTDEFDQRILYEYLAEASVVFPKVFPVVHNLLDSKINTLLSLCQDPNLLNPIHGIVQSVVYHEESPPQYQTSYLQSFGFNGLWRFAGPFSKQTQIPDYAELIVKFLDALIDTYLPGIDEETSEESLLTPTSPYPPALQSQLSITANLNLSNSMTSLATSQHSPGIDKENVELSPTTGHCNSGRTRHGSASQVQKQRSAGSFKRNSIKKIV.

The residue at position 2 (Ala2) is an N-acetylalanine. Phosphoserine occurs at positions 864 and 876. In terms of domain architecture, Ras-GAP spans His1251–Ile1482. A CRAL-TRIO domain is found at Glu1580–Lys1738. The segment at Glu1580–Asp1837 is lipid binding. 2 positions are modified to phosphoserine: Ser2188 and Ser2467. A Phosphothreonine modification is found at Thr2514. A phosphoserine mark is found at Ser2515, Ser2521, Ser2523, and Ser2543. Residues Lys2555–Arg2571 carry the Bipartite nuclear localization signal motif. Thr2565 carries the post-translational modification Phosphothreonine. Residues Ser2597, Ser2802, and Ser2817 each carry the phosphoserine modification. Positions Thr2787–Val2839 are disordered. The segment covering Leu2801–Ala2827 has biased composition (polar residues).

Interacts with HTR6. Interacts with SPRED2. In terms of processing, ubiquitinated by RNF7/RBX2, leading to its degradation. As to expression, detected in brain, peripheral nerve, lung, colon and muscle.

The protein resides in the nucleus. The protein localises to the nucleolus. Its subcellular location is the cell membrane. Its function is as follows. Stimulates the GTPase activity of Ras. NF1 shows greater affinity for Ras GAP, but lower specific activity. May be a regulator of Ras activity. The chain is Neurofibromin (NF1) from Homo sapiens (Human).